The primary structure comprises 181 residues: Isopentenyl-diphosphate Delta-isomerase (181 aa).

Positions 25 and 32 each coordinate Mn(2+). Residues 30-164 (PLHLAFSCWL…PWAFSPWMVM (135 aa)) form the Nudix hydrolase domain. Cys-67 is an active-site residue. Residue Cys-67 coordinates Mg(2+). His-69 lines the Mn(2+) pocket. Residue Glu-87 coordinates Mg(2+). Mn(2+) contacts are provided by Glu-114 and Glu-116. The active site involves Glu-116.

This sequence belongs to the IPP isomerase type 1 family. As to quaternary structure, homodimer. Mg(2+) is required as a cofactor. It depends on Mn(2+) as a cofactor.

It localises to the cytoplasm. It carries out the reaction isopentenyl diphosphate = dimethylallyl diphosphate. It functions in the pathway isoprenoid biosynthesis; dimethylallyl diphosphate biosynthesis; dimethylallyl diphosphate from isopentenyl diphosphate: step 1/1. Its function is as follows. Catalyzes the 1,3-allylic rearrangement of the homoallylic substrate isopentenyl (IPP) to its highly electrophilic allylic isomer, dimethylallyl diphosphate (DMAPP). The chain is Isopentenyl-diphosphate Delta-isomerase from Salmonella typhi.